The primary structure comprises 738 residues: NAD(P)H-quinone oxidoreductase subunit 5, chloroplastic (738 aa).

The next 16 membrane-spanning stretches (helical) occupy residues 9–29, 40–60, 89–109, 125–145, 147–167, 185–205, 230–250, 258–278, 280–300, 327–347, 354–374, 396–416, 425–445, 546–566, 603–623, and 718–738; these read WIIP…LLLF, WAFP…NLSI, IDPL…MVLI, FASM…SNLI, IYIF…FWFT, GDFG…SFEF, AALL…HVWL, TPIS…FLVA, LLPL…IGII, LGYM…FHLI, ALLF…VGYS, ISFL…CFWS, WLYS…TAFY, LFPL…GIPF, FSVS…KPIY, and YLFF…FPVF.

Belongs to the complex I subunit 5 family. In terms of assembly, NDH is composed of at least 16 different subunits, 5 of which are encoded in the nucleus.

It localises to the plastid. The protein resides in the chloroplast thylakoid membrane. It carries out the reaction a plastoquinone + NADH + (n+1) H(+)(in) = a plastoquinol + NAD(+) + n H(+)(out). It catalyses the reaction a plastoquinone + NADPH + (n+1) H(+)(in) = a plastoquinol + NADP(+) + n H(+)(out). NDH shuttles electrons from NAD(P)H:plastoquinone, via FMN and iron-sulfur (Fe-S) centers, to quinones in the photosynthetic chain and possibly in a chloroplast respiratory chain. The immediate electron acceptor for the enzyme in this species is believed to be plastoquinone. Couples the redox reaction to proton translocation, and thus conserves the redox energy in a proton gradient. The sequence is that of NAD(P)H-quinone oxidoreductase subunit 5, chloroplastic (ndhF) from Ligustrum vulgare (Common privet).